Consider the following 160-residue polypeptide: Major pollen allergen Bet v 1-F/I (160 aa).

The brassinolide site is built by lysine 55, tyrosine 82, tyrosine 84, and asparagine 101.

Belongs to the BetVI family.

Its subcellular location is the cytoplasm. In terms of biological role, may be a general steroid carrier protein. This chain is Major pollen allergen Bet v 1-F/I (BETV1F), found in Betula pendula (European white birch).